The sequence spans 28 residues: Chaperonin GroEL (28 aa).

It belongs to the chaperonin (HSP60) family. In terms of assembly, forms a cylinder of 14 subunits composed of two heptameric rings stacked back-to-back. Interacts with the co-chaperonin GroES.

The protein localises to the cytoplasm. It catalyses the reaction ATP + H2O + a folded polypeptide = ADP + phosphate + an unfolded polypeptide.. In terms of biological role, together with its co-chaperonin GroES, plays an essential role in assisting protein folding. The GroEL-GroES system forms a nano-cage that allows encapsulation of the non-native substrate proteins and provides a physical environment optimized to promote and accelerate protein folding. In Mycolicibacterium smegmatis (Mycobacterium smegmatis), this protein is Chaperonin GroEL.